The following is a 98-amino-acid chain: UPF0213 protein BPUM_0019 (98 aa).

The region spanning 4–79 (HNHYFYVLKC…KTWTRKKKDL (76 aa)) is the GIY-YIG domain.

This sequence belongs to the UPF0213 family.

This chain is UPF0213 protein BPUM_0019, found in Bacillus pumilus (strain SAFR-032).